Consider the following 57-residue polypeptide: Large ribosomal subunit protein bL32 (57 aa).

The disordered stretch occupies residues 1–25 (MATPSNKNSKSHKRNRRGHIGLNVP). Over residues 9–19 (SKSHKRNRRGH) the composition is skewed to basic residues.

The protein belongs to the bacterial ribosomal protein bL32 family.

The chain is Large ribosomal subunit protein bL32 from Leuconostoc mesenteroides subsp. mesenteroides (strain ATCC 8293 / DSM 20343 / BCRC 11652 / CCM 1803 / JCM 6124 / NCDO 523 / NBRC 100496 / NCIMB 8023 / NCTC 12954 / NRRL B-1118 / 37Y).